Consider the following 413-residue polypeptide: Serine hydroxymethyltransferase (413 aa).

Residues Leu-119 and 123–125 (GHL) each bind (6S)-5,6,7,8-tetrahydrofolate. Position 228 is an N6-(pyridoxal phosphate)lysine (Lys-228). 351-353 (SPF) provides a ligand contact to (6S)-5,6,7,8-tetrahydrofolate.

The protein belongs to the SHMT family. As to quaternary structure, homodimer. The cofactor is pyridoxal 5'-phosphate.

Its subcellular location is the cytoplasm. The enzyme catalyses (6R)-5,10-methylene-5,6,7,8-tetrahydrofolate + glycine + H2O = (6S)-5,6,7,8-tetrahydrofolate + L-serine. It participates in one-carbon metabolism; tetrahydrofolate interconversion. Its pathway is amino-acid biosynthesis; glycine biosynthesis; glycine from L-serine: step 1/1. In terms of biological role, catalyzes the reversible interconversion of serine and glycine with tetrahydrofolate (THF) serving as the one-carbon carrier. This reaction serves as the major source of one-carbon groups required for the biosynthesis of purines, thymidylate, methionine, and other important biomolecules. Also exhibits THF-independent aldolase activity toward beta-hydroxyamino acids, producing glycine and aldehydes, via a retro-aldol mechanism. This is Serine hydroxymethyltransferase from Lysinibacillus sphaericus (strain C3-41).